We begin with the raw amino-acid sequence, 995 residues long: MGVFCWSGCLVISLQLLLGAALDNLSTCKEEDYHYEYTECDSTGSRWRVAVPNPGKACAGLPDPVKGKECTFSCAAGEFLEISSQLCSKCEPGTYSLGTGIKFDEWDKMPQGFSNVATYMENTAEFSDNKPDSCVNSSWIPRGNYIESNSDDCTVSLIYAVHLKKAGSVSFEYQYLDNNIFFEFFIQNDQCQEMSSSSDKWVKLSDNSDWMNHMVSLKSGTNILYWRTTGILMGTKVAKPVLIKNITIEGVAYTSECFPCKPGTYSDEAGSSSCKICPRNTYSDRQAKECIKCFEEKEYSEEGASKCEERPPCTKKDLFQIHTPCDSERKTQVIYKWIEPKICREELPASIKLPASGNKEDCPPCNPGYFSNGTSACSPCPVGTYSNGLSECKTCPAGTEPVLGFEYKWWNILPGNMKTSCFNVGNSKCDGMNGWEVAGDHIQSGIGGTDNDYLILNLHISGFKPPTSVTGATGAELGRVTFVFENICVSDCVLYFMVDINRKSTSLVESFAGRKVYQSYTHVIHKNATYMFTWAFQRTNLAQDSRRFVNDIAKIYSIMVTNAIDGVSSSCRACALGPQQLGSSCVPCPAGHYIDKESNMCKECPPNTYLTPHQVYGKEACVPCGPGSKSNKDHSACYSECLVTYTNENQTLSYNFNNLGKVATLLNGPSFTSKGTKYYHLFNMSLCGHGGEKMAVCTDNITDVTGKDIEADSDDYSNVVKTFVCQSTIIPSDSKGFRTALSSQSVNLADSFLGVTNNSSLRGITISPDIFPSHLKIPDVNFFFKSLATTSSCEQGRATVISMRCNPAKLGQGDISVPRNCPAATCDGCNFYFLWETAEACPLCMESDYQKIEGACKHGQQETHYVWNEMKLCTNGVSLPEKNVSACESIDFWLKVGAGVGAFTAVLLIALTCYFWKKNQKLEYKYSKLVITANSKECELPAPDSCAIMEGEDNEDDVIYSNKQSLLEKLKSLATKEKEHNFESVQLKSSRAQNI.

An N-terminal signal peptide occupies residues Met1–Ala21. Residues Leu22–Lys895 lie on the Extracellular side of the membrane. Asn24, Asn136, Asn245, Asn372, Asn527, Asn649, Asn683, Asn700, and Asn758 each carry an N-linked (GlcNAc...) asparagine glycan. Residues Ser639–Leu843 form the MRH domain. 2 cysteine pairs are disulfide-bonded: Cys641/Cys687 and Cys697/Cys725. Cystine bridges form between Cys793–Cys829 and Cys805–Cys841. An N-linked (GlcNAc...) asparagine glycan is attached at Asn883. Residues Val896–Trp916 form a helical membrane-spanning segment. Residues Lys917 to Ile995 are Cytoplasmic-facing.

The protein belongs to the ELAPOR family. In terms of tissue distribution, expressed in the animal half of the embryo during gastrulation, becoming restricted to the ventral ectoderm at stage 12.5. At the neurula stage, expressed in the anterior ectoderm surrounding the neural plate, and weakly in the epidermis. Expression is especially high in the presumptive hatching gland and cement gland regions. Surprisingly, by the tailbud stage (stage 22), expression is limited to the hatching gland and is not seen in the cement gland. Conversely, in tadpoles expressed broadly in the head, heart and fin. Expression in the head is seen in the primary mouth and in the brain, eyes, otic vesicles and olfactory pits.

It localises to the cell membrane. Functions as a regulator of the BMP signaling pathway and is involved in epidermal differentiation. The chain is Endosome/lysosome-associated apoptosis and autophagy regulator family member 2 (elapor2) from Xenopus laevis (African clawed frog).